We begin with the raw amino-acid sequence, 148 residues long: Prefoldin subunit alpha (148 aa).

The protein belongs to the prefoldin subunit alpha family. Heterohexamer of two alpha and four beta subunits.

It is found in the cytoplasm. Molecular chaperone capable of stabilizing a range of proteins. Seems to fulfill an ATP-independent, HSP70-like function in archaeal de novo protein folding. This is Prefoldin subunit alpha (pfdA) from Pyrococcus horikoshii (strain ATCC 700860 / DSM 12428 / JCM 9974 / NBRC 100139 / OT-3).